A 425-amino-acid chain; its full sequence is Serine--tRNA ligase (425 aa).

233 to 235 (TAE) contributes to the L-serine binding site. 264-266 (RRE) is a binding site for ATP. Glutamate 287 is an L-serine binding site. 351–354 (EVSS) is a binding site for ATP. Serine 386 serves as a coordination point for L-serine.

The protein belongs to the class-II aminoacyl-tRNA synthetase family. Type-1 seryl-tRNA synthetase subfamily. As to quaternary structure, homodimer. The tRNA molecule binds across the dimer.

Its subcellular location is the cytoplasm. It carries out the reaction tRNA(Ser) + L-serine + ATP = L-seryl-tRNA(Ser) + AMP + diphosphate + H(+). The enzyme catalyses tRNA(Sec) + L-serine + ATP = L-seryl-tRNA(Sec) + AMP + diphosphate + H(+). It functions in the pathway aminoacyl-tRNA biosynthesis; selenocysteinyl-tRNA(Sec) biosynthesis; L-seryl-tRNA(Sec) from L-serine and tRNA(Sec): step 1/1. Catalyzes the attachment of serine to tRNA(Ser). Is also able to aminoacylate tRNA(Sec) with serine, to form the misacylated tRNA L-seryl-tRNA(Sec), which will be further converted into selenocysteinyl-tRNA(Sec). The chain is Serine--tRNA ligase from Thermosipho melanesiensis (strain DSM 12029 / CIP 104789 / BI429).